The sequence spans 195 residues: Antigenic thaumatin-like protein ARB_01183 (195 aa).

The first 22 residues, 1–22 (MHSNTAVIALSALAALVPAALA), serve as a signal peptide directing secretion. Intrachain disulfides connect Cys125/Cys153 and Cys130/Cys137. Residues 171 to 195 (GPKKMFKPVQEKAANRPRHPHARPE) form a disordered region. Residues 185-195 (NRPRHPHARPE) are compositionally biased toward basic residues.

This sequence belongs to the thaumatin family.

The protein resides in the secreted. Its function is as follows. Might be involved in the inhibition of growth of fungal competitors and pathogenicity. This is Antigenic thaumatin-like protein ARB_01183 from Arthroderma benhamiae (strain ATCC MYA-4681 / CBS 112371) (Trichophyton mentagrophytes).